Here is a 292-residue protein sequence, read N- to C-terminus: Oxidative stress-responsive serine-rich protein 1 (292 aa).

Positions 27 to 175 (SIASLSVGEG…SSDATQVSQA (149 aa)) are disordered. Positions 65–83 (STRKSSRGVVRTQRRRRSK) are enriched in basic residues. 2 positions are modified to phosphothreonine: Thr-143 and Thr-233.

This is Oxidative stress-responsive serine-rich protein 1 (OSER1) from Pongo abelii (Sumatran orangutan).